Consider the following 279-residue polypeptide: uncharacterized protein (279 aa).

3 consecutive transmembrane segments (helical) span residues 1 to 21, 38 to 58, and 131 to 151; these read MGFI…LCGI, FACH…SVVA, and SLRY…VFID.

It belongs to the 1-acyl-sn-glycerol-3-phosphate acyltransferase family.

The protein resides in the endoplasmic reticulum membrane. This is an uncharacterized protein from Schizosaccharomyces pombe (strain 972 / ATCC 24843) (Fission yeast).